The sequence spans 371 residues: Bifunctional enzyme IspD/IspF (371 aa).

The 2-C-methyl-D-erythritol 4-phosphate cytidylyltransferase stretch occupies residues 1–210 (MSEISLIMLA…LDLPKPSFEI (210 aa)). The segment at 211–371 (FTGNGFDVHE…NLKYFDWTRL (161 aa)) is 2-C-methyl-D-erythritol 2,4-cyclodiphosphate synthase. A divalent metal cation contacts are provided by D217 and H219. 4-CDP-2-C-methyl-D-erythritol 2-phosphate is bound by residues 217–219 (DVH) and 243–244 (HS). Position 251 (H251) interacts with a divalent metal cation. Residues 265 to 267 (DIG), 270 to 274 (YPDTD), 341 to 344 (TTTE), F348, and R351 each bind 4-CDP-2-C-methyl-D-erythritol 2-phosphate.

The protein in the N-terminal section; belongs to the IspD/TarI cytidylyltransferase family. IspD subfamily. It in the C-terminal section; belongs to the IspF family. A divalent metal cation serves as cofactor.

It carries out the reaction 2-C-methyl-D-erythritol 4-phosphate + CTP + H(+) = 4-CDP-2-C-methyl-D-erythritol + diphosphate. The enzyme catalyses 4-CDP-2-C-methyl-D-erythritol 2-phosphate = 2-C-methyl-D-erythritol 2,4-cyclic diphosphate + CMP. The protein operates within isoprenoid biosynthesis; isopentenyl diphosphate biosynthesis via DXP pathway; isopentenyl diphosphate from 1-deoxy-D-xylulose 5-phosphate: step 2/6. It participates in isoprenoid biosynthesis; isopentenyl diphosphate biosynthesis via DXP pathway; isopentenyl diphosphate from 1-deoxy-D-xylulose 5-phosphate: step 4/6. In terms of biological role, bifunctional enzyme that catalyzes the formation of 4-diphosphocytidyl-2-C-methyl-D-erythritol from CTP and 2-C-methyl-D-erythritol 4-phosphate (MEP) (IspD), and catalyzes the conversion of 4-diphosphocytidyl-2-C-methyl-D-erythritol 2-phosphate (CDP-ME2P) to 2-C-methyl-D-erythritol 2,4-cyclodiphosphate (ME-CPP) with a corresponding release of cytidine 5-monophosphate (CMP) (IspF). In Campylobacter jejuni subsp. doylei (strain ATCC BAA-1458 / RM4099 / 269.97), this protein is Bifunctional enzyme IspD/IspF.